Consider the following 361-residue polypeptide: Peptide chain release factor 1 (361 aa).

Gln235 is subject to N5-methylglutamine.

This sequence belongs to the prokaryotic/mitochondrial release factor family. Methylated by PrmC. Methylation increases the termination efficiency of RF1.

It is found in the cytoplasm. In terms of biological role, peptide chain release factor 1 directs the termination of translation in response to the peptide chain termination codons UAG and UAA. In Rhodopseudomonas palustris (strain BisB18), this protein is Peptide chain release factor 1.